Consider the following 278-residue polypeptide: Protoheme IX farnesyltransferase 1 (278 aa).

The next 9 helical transmembrane spans lie at 12–32 (VIWL…GGVD), 35–55 (LFSL…FNHY), 76–96 (LITP…GISL), 98–118 (FLLL…FYAV), 129–149 (WLNI…GYAL), 158–178 (AVLI…ALAF), 199–221 (ERAV…WLYL), 226–248 (GAGG…YAAV), and 255–275 (MWKM…ALIL).

Belongs to the UbiA prenyltransferase family. Protoheme IX farnesyltransferase subfamily.

The protein resides in the cell membrane. The enzyme catalyses heme b + (2E,6E)-farnesyl diphosphate + H2O = Fe(II)-heme o + diphosphate. The protein operates within porphyrin-containing compound metabolism; heme O biosynthesis; heme O from protoheme: step 1/1. Functionally, converts heme B (protoheme IX) to heme O by substitution of the vinyl group on carbon 2 of heme B porphyrin ring with a hydroxyethyl farnesyl side group. This is Protoheme IX farnesyltransferase 1 from Pyrobaculum aerophilum (strain ATCC 51768 / DSM 7523 / JCM 9630 / CIP 104966 / NBRC 100827 / IM2).